A 473-amino-acid polypeptide reads, in one-letter code: Arginine biosynthesis bifunctional protein ArgJ, mitochondrial (473 aa).

Substrate is bound by residues Thr201, Lys230, Thr241, Glu328, Asn468, and Thr473. Thr241 functions as the Nucleophile in the catalytic mechanism.

This sequence belongs to the ArgJ family. Heterodimer of an alpha and a beta chain. Post-translationally, the alpha and beta chains are autoproteolytically processed from a single precursor protein within the mitochondrion.

The protein localises to the mitochondrion matrix. It carries out the reaction N(2)-acetyl-L-ornithine + L-glutamate = N-acetyl-L-glutamate + L-ornithine. The catalysed reaction is L-glutamate + acetyl-CoA = N-acetyl-L-glutamate + CoA + H(+). The protein operates within amino-acid biosynthesis; L-arginine biosynthesis; L-ornithine and N-acetyl-L-glutamate from L-glutamate and N(2)-acetyl-L-ornithine (cyclic): step 1/1. Its pathway is amino-acid biosynthesis; L-arginine biosynthesis; N(2)-acetyl-L-ornithine from L-glutamate: step 1/4. In terms of biological role, catalyzes two activities which are involved in the cyclic version of arginine biosynthesis: the synthesis of acetylglutamate from glutamate and acetyl-CoA, and of ornithine by transacetylation between acetylornithine and glutamate. This is Arginine biosynthesis bifunctional protein ArgJ, mitochondrial from Ajellomyces capsulatus (strain H143) (Darling's disease fungus).